Consider the following 1367-residue polypeptide: MSFPDEETDLLSEAKHCIRNVIHRTHRKFLENRLIGNFDSEDFSDAWKKKFAHAPTWCDADMSLQQIKRGKAVGNTVALTARAFFQLWLFRIGCFVQRWAWSTIFISLFLYCLCLGGLRHVTIETDLVKLWVSEGGRLNEEMGYLGQVKFERESGHLVHKVKRAVEQTTEPPAPAVKAEVRRGPELPKENGLGGGFQVVIQTPSFDGQNILSKEALQQHTKLMEEISTYEVKMFNETWTLSDICFKPPGPSFNSGPLAGIMSKLLDKIIPCIWITPIDCYWDGAKPLGPNPPLNLGPEVASFVSSLPPGNVTWKNLNPTSVIKEVGTLFDLGPIGNFFERAGIDGAYLDRPCIDPLEEECPKSAPNYFDRCHALTKFNEWNMAKAMSEQVTLERKIIPKDDGKSDIAETILNDIFGKKRRKRQADTTTKKPATKKDEDYYEYEDDADYLAGIANSTIAKKNPEKEAKDLLCLEYGSSLLKWMQENPERLGEFLTKEEMPDYPNYGDVMTGGCKGFGKKIMEWPEDLIIGGIQRDNGKLVSAEALQSVFLVSGAYDVFARIKNDKTDSHPGLDRHHFQPWMAGEIISTWQRNFTKRLYSHELNRERRQFHPLASTSIADMLEEFSQFNYIIIVIGYILMVIYAAFTQGRFQGWWLAVQSNVALAICGVILVTISSICGLGFATHLGINFNAATTQVVPFLSLGLGIDDMFLLLHNYDEIINICNKNEIGVLLKETGMSVMLTSINNILAFISGYVLPIPALRSFCSQTAILLAFNLIFLMFIFPAMIGIDLRRQRKGKRDLAYCSRGNPQMATSQSVPSNVSNMSSRAELAGYEKQADEYKRHEPWYTVGGFLNKIYIPALKNNVVKACVLIGTTTAVVFGLYGMYTSTLGLELADVLPEHTPPAAFLRAREQYFSFYPMFAVLRGDKLDIPNQQQLIEEYRAQLGSSKFMIKAEGKLQPYWMSMLRVWLQSLDMALEKDLAAGKFDLTNGNPIKVNGEKPSPESMIAARLVCSFGTNYNCDGRLGKMKMVENEVINPEGFYNYLTGWFNVDNMMYYVSQASFYPTPPGWEYNEKLAKVVPAAEPLLYSQMPFYQNDLIDTPAIVKMIEEIRATCEEYSERGLSNHPSGIAFTFWEQYLTLRWNLFQAICIIALAVFCVISILMFNPWAATLIMCIVVITTIELGGFMGLMGIKMNPISAVTLICAVGIGVEFTAHVELAFLTALGTIDQRLESCLQHMFVPVYHGAISTFLGVVMLVFSEFDFVVTYFFYTMTLLVALGVFNGLCVLPVILTLVGPKPELTPTDGSSVLPPPPPLRQQYAEKSGGVEGGMRKRKEKRPAEVEMSARDSPSTSSASHSSDDESSPAHK.

The Cytoplasmic segment spans residues 1–97 (MSFPDEETDL…WLFRIGCFVQ (97 aa)). The chain crosses the membrane as a helical span at residues 98–118 (RWAWSTIFISLFLYCLCLGGL). At 119 to 625 (RHVTIETDLV…IADMLEEFSQ (507 aa)) the chain is on the extracellular side. Residues Asn235, Asn310, Asn454, and Asn591 are each glycosylated (N-linked (GlcNAc...) asparagine). The helical transmembrane segment at 626–646 (FNYIIIVIGYILMVIYAAFTQ) threads the bilayer. One can recognise an SSD domain in the interval 627–788 (NYIIIVIGYI…MFIFPAMIGI (162 aa)). Over 647 to 659 (GRFQGWWLAVQSN) the chain is Cytoplasmic. The helical transmembrane segment at 660–680 (VALAICGVILVTISSICGLGF) threads the bilayer. The Extracellular portion of the chain corresponds to 681–694 (ATHLGINFNAATTQ). A helical membrane pass occupies residues 695-715 (VVPFLSLGLGIDDMFLLLHNY). Over 716–737 (DEIINICNKNEIGVLLKETGMS) the chain is Cytoplasmic. Residues 738–758 (VMLTSINNILAFISGYVLPIP) form a helical membrane-spanning segment. Residues 759 to 767 (ALRSFCSQT) are Extracellular-facing. Residues 768-788 (AILLAFNLIFLMFIFPAMIGI) form a helical membrane-spanning segment. The Cytoplasmic portion of the chain corresponds to 789–863 (DLRRQRKGKR…KIYIPALKNN (75 aa)). A helical transmembrane segment spans residues 864 to 884 (VVKACVLIGTTTAVVFGLYGM). Residues 885 to 1143 (YTSTLGLELA…WEQYLTLRWN (259 aa)) lie on the Extracellular side of the membrane. A helical transmembrane segment spans residues 1144–1164 (LFQAICIIALAVFCVISILMF). The Cytoplasmic segment spans residues 1165-1171 (NPWAATL). A helical membrane pass occupies residues 1172–1192 (IMCIVVITTIELGGFMGLMGI). Residues 1193–1199 (KMNPISA) lie on the Extracellular side of the membrane. Residues 1200–1220 (VTLICAVGIGVEFTAHVELAF) traverse the membrane as a helical segment. Topologically, residues 1221–1237 (LTALGTIDQRLESCLQH) are cytoplasmic. The chain crosses the membrane as a helical span at residues 1238–1258 (MFVPVYHGAISTFLGVVMLVF). The Extracellular segment spans residues 1259–1273 (SEFDFVVTYFFYTMT). A helical membrane pass occupies residues 1274-1294 (LLVALGVFNGLCVLPVILTLV). Topologically, residues 1295-1367 (GPKPELTPTD…SDDESSPAHK (73 aa)) are cytoplasmic. The tract at residues 1302 to 1367 (PTDGSSVLPP…SDDESSPAHK (66 aa)) is disordered. Positions 1346–1356 (RDSPSTSSASH) are enriched in low complexity.

The protein belongs to the patched family. As to expression, in males, expressed in the precursor and mature sensory rays, the cloaca, and pre-anal ganglia and cephalic neurons. Also expressed in five cells in the valve region between the seminal vesicle and vas deferens of the somatic gonad.

It localises to the apical cell membrane. The protein localises to the cell junction. The protein resides in the adherens junction. In terms of biological role, regulates osmosis during embryonic development. Required for larval development and in particular is involved in larval molting. The polypeptide is Protein patched homolog 3 (Caenorhabditis elegans).